Reading from the N-terminus, the 408-residue chain is Acetate kinase (408 aa).

Asn-10 contacts Mg(2+). An ATP-binding site is contributed by Lys-17. Arg-96 provides a ligand contact to substrate. Asp-153 acts as the Proton donor/acceptor in catalysis. ATP is bound by residues 213–217 (HLGNG) and 288–290 (DLR). A Mg(2+)-binding site is contributed by Glu-393.

The protein belongs to the acetokinase family. As to quaternary structure, homodimer. The cofactor is Mg(2+). It depends on Mn(2+) as a cofactor.

The protein localises to the cytoplasm. The enzyme catalyses acetate + ATP = acetyl phosphate + ADP. Its pathway is metabolic intermediate biosynthesis; acetyl-CoA biosynthesis; acetyl-CoA from acetate: step 1/2. Functionally, catalyzes the formation of acetyl phosphate from acetate and ATP. Can also catalyze the reverse reaction. This Borrelia recurrentis (strain A1) protein is Acetate kinase.